Reading from the N-terminus, the 360-residue chain is A-type ATP synthase subunit C (360 aa).

Positions 1-23 (MRLLERLWGKKPSRKSDKKKKGT) are disordered. A compositionally biased stretch (basic residues) spans 9–22 (GKKPSRKSDKKKKG).

The protein belongs to the V-ATPase V0D/AC39 subunit family. As to quaternary structure, has multiple subunits with at least A(3), B(3), C, D, E, F, H, I and proteolipid K(x).

Its subcellular location is the cell membrane. Component of the A-type ATP synthase that produces ATP from ADP in the presence of a proton gradient across the membrane. This is A-type ATP synthase subunit C from Methanosarcina acetivorans (strain ATCC 35395 / DSM 2834 / JCM 12185 / C2A).